A 282-amino-acid polypeptide reads, in one-letter code: Undecaprenyl-diphosphatase (282 aa).

A run of 8 helical transmembrane segments spans residues 1–21 (MTLI…FLPI), 39–59 (PGAA…MLYF), 85–105 (AKMG…GLLF), 115–135 (SLYW…LAEW), 153–173 (IGWK…IPGS), 193–213 (AARF…AFEL), 229–249 (NLAV…AFLL), and 259–279 (IFIA…GGGT).

The protein belongs to the UppP family.

It localises to the cell inner membrane. The catalysed reaction is di-trans,octa-cis-undecaprenyl diphosphate + H2O = di-trans,octa-cis-undecaprenyl phosphate + phosphate + H(+). Its function is as follows. Catalyzes the dephosphorylation of undecaprenyl diphosphate (UPP). Confers resistance to bacitracin. This Chlorobium luteolum (strain DSM 273 / BCRC 81028 / 2530) (Pelodictyon luteolum) protein is Undecaprenyl-diphosphatase.